The primary structure comprises 154 residues: Endoribonuclease YbeY (154 aa).

Zn(2+)-binding residues include His118, His122, and His128.

This sequence belongs to the endoribonuclease YbeY family. Requires Zn(2+) as cofactor.

It is found in the cytoplasm. Functionally, single strand-specific metallo-endoribonuclease involved in late-stage 70S ribosome quality control and in maturation of the 3' terminus of the 16S rRNA. The sequence is that of Endoribonuclease YbeY from Macrococcus caseolyticus (strain JCSC5402) (Macrococcoides caseolyticum).